A 492-amino-acid polypeptide reads, in one-letter code: Ketol-acid reductoisomerase (NADP(+)) (492 aa).

The KARI N-terminal Rossmann domain maps to Leu14–Ser208. Residues Cys45–Gln48, Arg68, Arg76, Ser78, and Asp108–Gln110 contribute to the NADP(+) site. His132 is a catalytic residue. Gly158 is a binding site for NADP(+). KARI C-terminal knotted domains follow at residues Ser209–Lys344 and Tyr345–Met485. Residues Asp217, Glu221, Glu389, and Glu393 each contribute to the Mg(2+) site. A substrate-binding site is contributed by Ser414.

This sequence belongs to the ketol-acid reductoisomerase family. The cofactor is Mg(2+).

It catalyses the reaction (2R)-2,3-dihydroxy-3-methylbutanoate + NADP(+) = (2S)-2-acetolactate + NADPH + H(+). The enzyme catalyses (2R,3R)-2,3-dihydroxy-3-methylpentanoate + NADP(+) = (S)-2-ethyl-2-hydroxy-3-oxobutanoate + NADPH + H(+). Its pathway is amino-acid biosynthesis; L-isoleucine biosynthesis; L-isoleucine from 2-oxobutanoate: step 2/4. It functions in the pathway amino-acid biosynthesis; L-valine biosynthesis; L-valine from pyruvate: step 2/4. Involved in the biosynthesis of branched-chain amino acids (BCAA). Catalyzes an alkyl-migration followed by a ketol-acid reduction of (S)-2-acetolactate (S2AL) to yield (R)-2,3-dihydroxy-isovalerate. In the isomerase reaction, S2AL is rearranged via a Mg-dependent methyl migration to produce 3-hydroxy-3-methyl-2-ketobutyrate (HMKB). In the reductase reaction, this 2-ketoacid undergoes a metal-dependent reduction by NADPH to yield (R)-2,3-dihydroxy-isovalerate. This Haemophilus influenzae (strain 86-028NP) protein is Ketol-acid reductoisomerase (NADP(+)).